The chain runs to 336 residues: Ornithine carbamoyltransferase, catabolic (336 aa).

Residues 62-65, Q89, R113, and 140-143 contribute to the carbamoyl phosphate site; these read STRT and HPTQ. L-ornithine is bound by residues N172, D236, and 240–241; that span reads SM. Residues 277–278 and R322 contribute to the carbamoyl phosphate site; that span reads CL.

Belongs to the aspartate/ornithine carbamoyltransferase superfamily. OTCase family.

Its subcellular location is the cytoplasm. It catalyses the reaction carbamoyl phosphate + L-ornithine = L-citrulline + phosphate + H(+). It functions in the pathway amino-acid degradation; L-arginine degradation via ADI pathway; carbamoyl phosphate from L-arginine: step 2/2. In terms of biological role, reversibly catalyzes the transfer of the carbamoyl group from carbamoyl phosphate (CP) to the N(epsilon) atom of ornithine (ORN) to produce L-citrulline. The protein is Ornithine carbamoyltransferase, catabolic (arcB) of Staphylococcus aureus (strain N315).